The following is a 20-amino-acid chain: Small ribosomal subunit protein bS20 (20 aa).

This sequence belongs to the bacterial ribosomal protein bS20 family.

Its function is as follows. Binds directly to 16S ribosomal RNA. This chain is Small ribosomal subunit protein bS20 (rpsT), found in Brevundimonas diminuta (Pseudomonas diminuta).